The primary structure comprises 591 residues: Aspartate--tRNA(Asp/Asn) ligase (591 aa).

L-aspartate is bound at residue Glu175. The tract at residues 199-202 (QQYK) is aspartate. 2 residues coordinate L-aspartate: Arg221 and His450. 221–223 (RDE) contributes to the ATP binding site. Residue Glu484 coordinates ATP. Residue Arg491 coordinates L-aspartate. ATP is bound at residue 536-539 (GVDR).

The protein belongs to the class-II aminoacyl-tRNA synthetase family. Type 1 subfamily. As to quaternary structure, homodimer.

Its subcellular location is the cytoplasm. It carries out the reaction tRNA(Asx) + L-aspartate + ATP = L-aspartyl-tRNA(Asx) + AMP + diphosphate. Aspartyl-tRNA synthetase with relaxed tRNA specificity since it is able to aspartylate not only its cognate tRNA(Asp) but also tRNA(Asn). Reaction proceeds in two steps: L-aspartate is first activated by ATP to form Asp-AMP and then transferred to the acceptor end of tRNA(Asp/Asn). The polypeptide is Aspartate--tRNA(Asp/Asn) ligase (Rhodopseudomonas palustris (strain TIE-1)).